Reading from the N-terminus, the 218-residue chain is Monomethylamine corrinoid protein 1 (218 aa).

Residues methionine 1 to glutamate 91 enclose the B12-binding N-terminal domain. Residues threonine 94 to lysine 218 form the B12-binding domain. Position 107 (histidine 107) interacts with methylcob(III)alamin.

This sequence belongs to the methylamine corrinoid protein family. In terms of assembly, can form a complex with MtmB.

The protein operates within one-carbon metabolism; methanogenesis from methylamine. In terms of biological role, acts as a methyl group carrier between MtmB and MtbA. The sequence is that of Monomethylamine corrinoid protein 1 (mtmC1) from Methanosarcina acetivorans (strain ATCC 35395 / DSM 2834 / JCM 12185 / C2A).